The chain runs to 371 residues: Histidinol-phosphate aminotransferase (371 aa).

At lysine 228 the chain carries N6-(pyridoxal phosphate)lysine.

It belongs to the class-II pyridoxal-phosphate-dependent aminotransferase family. Histidinol-phosphate aminotransferase subfamily. Pyridoxal 5'-phosphate is required as a cofactor.

The enzyme catalyses L-histidinol phosphate + 2-oxoglutarate = 3-(imidazol-4-yl)-2-oxopropyl phosphate + L-glutamate. The protein operates within amino-acid biosynthesis; L-histidine biosynthesis; L-histidine from 5-phospho-alpha-D-ribose 1-diphosphate: step 7/9. This is Histidinol-phosphate aminotransferase from Methanococcus maripaludis (strain C5 / ATCC BAA-1333).